Here is a 237-residue protein sequence, read N- to C-terminus: Ribosomal RNA small subunit methyltransferase G (237 aa).

S-adenosyl-L-methionine-binding positions include glycine 78, phenylalanine 83, 129-130, and arginine 148; that span reads AE.

The protein belongs to the methyltransferase superfamily. RNA methyltransferase RsmG family.

It is found in the cytoplasm. In terms of biological role, specifically methylates the N7 position of a guanine in 16S rRNA. This chain is Ribosomal RNA small subunit methyltransferase G, found in Streptococcus pyogenes serotype M6 (strain ATCC BAA-946 / MGAS10394).